We begin with the raw amino-acid sequence, 92 residues long: UPF0223 protein SSA_0938 (92 aa).

Belongs to the UPF0223 family.

The sequence is that of UPF0223 protein SSA_0938 from Streptococcus sanguinis (strain SK36).